Consider the following 159-residue polypeptide: Peptide methionine sulfoxide reductase MsrB (159 aa).

Residues 14 to 137 (TEKLKENLTE…NSASLKFIAK (124 aa)) form the MsrB domain. The active-site Nucleophile is Cys-126.

This sequence belongs to the MsrB Met sulfoxide reductase family.

The enzyme catalyses L-methionyl-[protein] + [thioredoxin]-disulfide + H2O = L-methionyl-(R)-S-oxide-[protein] + [thioredoxin]-dithiol. This chain is Peptide methionine sulfoxide reductase MsrB, found in Hathewaya histolytica (Clostridium histolyticum).